A 229-amino-acid chain; its full sequence is Cytochrome c oxidase subunit 2 (229 aa).

Residues 1–26 lie on the Mitochondrial intermembrane side of the membrane; sequence MSTWANLGLQDSASPLMEQLIFFHDH. Residues 27–48 traverse the membrane as a helical segment; the sequence is ALLILVMITVLVGYLMFMLFFN. Over 49–62 the chain is Mitochondrial matrix; that stretch reads SYVNRFLLHGQLIE. The chain crosses the membrane as a helical span at residues 63–82; the sequence is MIWTILPAIILLFIAMPSLR. Residues 83 to 229 lie on the Mitochondrial intermembrane side of the membrane; it reads LLYLLDEINE…IKWISNSVNS (147 aa). 6 residues coordinate Cu cation: His161, Cys196, Glu198, Cys200, His204, and Met207. Residue Glu198 participates in Mg(2+) binding.

Belongs to the cytochrome c oxidase subunit 2 family. As to quaternary structure, component of the cytochrome c oxidase (complex IV, CIV), a multisubunit enzyme composed of a catalytic core of 3 subunits and several supernumerary subunits. The complex exists as a monomer or a dimer and forms supercomplexes (SCs) in the inner mitochondrial membrane with ubiquinol-cytochrome c oxidoreductase (cytochrome b-c1 complex, complex III, CIII). Cu cation serves as cofactor.

The protein resides in the mitochondrion inner membrane. It carries out the reaction 4 Fe(II)-[cytochrome c] + O2 + 8 H(+)(in) = 4 Fe(III)-[cytochrome c] + 2 H2O + 4 H(+)(out). In terms of biological role, component of the cytochrome c oxidase, the last enzyme in the mitochondrial electron transport chain which drives oxidative phosphorylation. The respiratory chain contains 3 multisubunit complexes succinate dehydrogenase (complex II, CII), ubiquinol-cytochrome c oxidoreductase (cytochrome b-c1 complex, complex III, CIII) and cytochrome c oxidase (complex IV, CIV), that cooperate to transfer electrons derived from NADH and succinate to molecular oxygen, creating an electrochemical gradient over the inner membrane that drives transmembrane transport and the ATP synthase. Cytochrome c oxidase is the component of the respiratory chain that catalyzes the reduction of oxygen to water. Electrons originating from reduced cytochrome c in the intermembrane space (IMS) are transferred via the dinuclear copper A center (CU(A)) of subunit 2 and heme A of subunit 1 to the active site in subunit 1, a binuclear center (BNC) formed by heme A3 and copper B (CU(B)). The BNC reduces molecular oxygen to 2 water molecules using 4 electrons from cytochrome c in the IMS and 4 protons from the mitochondrial matrix. This Drosophila narragansett (Fruit fly) protein is Cytochrome c oxidase subunit 2 (mt:CoII).